Here is a 252-residue protein sequence, read N- to C-terminus: 2-succinyl-6-hydroxy-2,4-cyclohexadiene-1-carboxylate synthase (252 aa).

It belongs to the AB hydrolase superfamily. MenH family. As to quaternary structure, monomer.

The enzyme catalyses 5-enolpyruvoyl-6-hydroxy-2-succinyl-cyclohex-3-ene-1-carboxylate = (1R,6R)-6-hydroxy-2-succinyl-cyclohexa-2,4-diene-1-carboxylate + pyruvate. The protein operates within quinol/quinone metabolism; 1,4-dihydroxy-2-naphthoate biosynthesis; 1,4-dihydroxy-2-naphthoate from chorismate: step 3/7. It functions in the pathway quinol/quinone metabolism; menaquinone biosynthesis. Catalyzes a proton abstraction reaction that results in 2,5-elimination of pyruvate from 2-succinyl-5-enolpyruvyl-6-hydroxy-3-cyclohexene-1-carboxylate (SEPHCHC) and the formation of 2-succinyl-6-hydroxy-2,4-cyclohexadiene-1-carboxylate (SHCHC). In Escherichia coli (strain SMS-3-5 / SECEC), this protein is 2-succinyl-6-hydroxy-2,4-cyclohexadiene-1-carboxylate synthase.